Consider the following 108-residue polypeptide: Nucleoid-associated protein Bphy_0952 (108 aa).

The segment at 87–108 is disordered; sequence AQEKMGGMTSGLPLPPGFKLPF. A compositionally biased stretch (pro residues) spans 99–108; it reads PLPPGFKLPF.

It belongs to the YbaB/EbfC family. In terms of assembly, homodimer.

It is found in the cytoplasm. It localises to the nucleoid. In terms of biological role, binds to DNA and alters its conformation. May be involved in regulation of gene expression, nucleoid organization and DNA protection. The sequence is that of Nucleoid-associated protein Bphy_0952 from Paraburkholderia phymatum (strain DSM 17167 / CIP 108236 / LMG 21445 / STM815) (Burkholderia phymatum).